The sequence spans 247 residues: Molybdate/tungstate transport system permease protein WtpB (247 aa).

Topologically, residues 1 to 8 (MRRDYTLY) are cytoplasmic. A helical membrane pass occupies residues 9-29 (LFAALGTFLIAYIAVPIAVIF). Residues 30 to 55 (LKQASDVEMLVKTLHDPYVIEAIRNS) lie on the Extracellular side of the membrane. The ABC transmembrane type-1 domain maps to 52–238 (IRNSLLTATA…SLSLGIFVIL (187 aa)). A helical membrane pass occupies residues 56–76 (LLTATATALIALLFGVPLGYV). Residues 77-90 (LARKDFPGKSAVQA) are Cytoplasmic-facing. Residues 91–111 (LVDVPIVIPHSVVGIMLLVTF) form a helical membrane-spanning segment. Topologically, residues 112 to 114 (SNS) are extracellular. The chain crosses the membrane as a helical span at residues 115–135 (ILDSYKGIVAAMLFVSAPFTI). Topologically, residues 136–163 (NAARDGFLAVDEKLEAVARTLGASRWRA) are cytoplasmic. Residues 164–184 (FLSISLPMAFPSIASGAIMTW) traverse the membrane as a helical segment. Topologically, residues 185–222 (ARAISEVGAILIVAYYPKTAQVLILEYFNNYGLRASRP) are extracellular. The chain crosses the membrane as a helical span at residues 223–243 (IAVIMVSLSLGIFVILRWLVG). The Cytoplasmic segment spans residues 244-247 (RKNA).

The protein belongs to the binding-protein-dependent transport system permease family. As to quaternary structure, the complex is composed of two ATP-binding proteins (WtpC), two transmembrane proteins (WtpB) and a solute-binding protein (WtpA).

The protein resides in the cell membrane. Functionally, part of the ABC transporter complex WtpABC involved in molybdate/tungstate import. Probably responsible for the translocation of the substrate across the membrane. The chain is Molybdate/tungstate transport system permease protein WtpB (wtpB) from Thermococcus kodakarensis (strain ATCC BAA-918 / JCM 12380 / KOD1) (Pyrococcus kodakaraensis (strain KOD1)).